The following is a 53-amino-acid chain: Lantibiotic mutacin-2 (53 aa).

Positions 1–26 (MNKLNSNAVVSLNEVSDSELDTILGG) are excised as a propeptide. Positions 36-41 (TVSYEC) form a cross-link, beta-methyllanthionine (Thr-Cys). 2 consecutive cross-links (lanthionine (Ser-Cys)) follow at residues 38–52 (SYECRMNSWQHVFTC) and 45–53 (SWQHVFTCC). At Thr51 the chain carries 2,3-didehydrobutyrine.

Maturation of lantibiotics involves the enzymatic conversion of Thr, and Ser into dehydrated AA and the formation of thioether bonds with cysteine. This is followed by membrane translocation and cleavage of the modified precursor. Post-translationally, it is not established whether the 2,3-didehydrobutyrine is the E- or Z-isomer.

Functionally, lanthionine-containing peptide antibiotic (lantibiotic) active on Gram-positive bacteria including M.luteus, S.aureus, Streptococcus, P.micros, P.acidilactici, C.sporogenes, C.diphtheriae, A.viscosus, G.vaginalis, P.acnes, L.monocytogenes and M.smegmatis, and Gram-negative bacteria including C.jejuni, H.pylori and N.gonorrhoeae. Transiently and partially depolarizes the transmembrane electrical potential and pH gradient of susceptible cells, inhibits the uptake of amino acids and depletes the intracellular ATP pool. In Streptococcus mutans, this protein is Lantibiotic mutacin-2.